A 396-amino-acid polypeptide reads, in one-letter code: L-aspartate--glyoxylate aminotransferase (396 aa).

An N6-(pyridoxal phosphate)lysine modification is found at lysine 196.

Belongs to the class-V pyridoxal-phosphate-dependent aminotransferase family. Pyridoxal 5'-phosphate is required as a cofactor.

It carries out the reaction oxaloacetate + glycine = glyoxylate + L-aspartate. In terms of biological role, catalyzes the transamination of glyoxylate into glycine using L-aspartate as the preferred amino group donor. Is essential for the growth of P.denitrificans in the presence of glycolate and glyoxylate since it functions in glyoxylate assimilation via the beta-hydroxyaspartate cycle (BHAC). Can catalyze the reverse reaction in vitro, and also use L-serine and L-glutamate as amino group donor, but with much less efficiency than L-aspartate. The polypeptide is L-aspartate--glyoxylate aminotransferase (Paracoccus denitrificans (strain Pd 1222)).